The sequence spans 344 residues: Protein L-Myc-1-B (344 aa).

2 stretches are compositionally biased toward polar residues: residues 104–113 (GSPRVTNTQK) and 213–223 (NTMSPQHNFHS). 2 disordered regions span residues 104-162 (GSPR…EDEI) and 208-271 (LPPE…YLER). The span at 259 to 270 (DLAKRKNHNYLE) shows a compositional bias: basic and acidic residues. A bHLH domain is found at 261-313 (AKRKNHNYLERKRRNDLRSRFLALREEVPSLSRSTKTPKVVVLSKATEFLKGL). Positions 313 to 341 (LVIQEQQLTAEKLKLWSRHQQLLRRISQL) are leucine-zipper.

As to quaternary structure, efficient DNA binding requires dimerization with another bHLH protein. Binds DNA as a heterodimer with MAX. In terms of tissue distribution, high levels in oocytes, modest levels in kidney and low levels in spleen.

It is found in the nucleus. The protein is Protein L-Myc-1-B (mycl1-b) of Xenopus laevis (African clawed frog).